A 633-amino-acid chain; its full sequence is ATP-dependent RNA helicase mrh4, mitochondrial (633 aa).

Residues 1 to 38 (MNRLGRLSLPLRPQVCLLCQTQATMSSPLAGWQAVRSM) constitute a mitochondrion transit peptide. A disordered region spans residues 50 to 115 (MVLSSNVDKS…KQKPDSPLYK (66 aa)). Positions 52-63 (LSSNVDKSSLKQ) are enriched in polar residues. A compositionally biased stretch (basic and acidic residues) spans 98–109 (RSGDSEDDKQKP). The Q motif motif lies at 142–175 (SSFDQFPLLPVVRHSISSQALSRTGDIVPTPIQR). One can recognise a Helicase ATP-binding domain in the interval 195–407 (SDHEPNFEQY…RKRYPDIRRL (213 aa)). Position 208–215 (208–215 (AETGSGKT)) interacts with ATP. The short motif at 354 to 357 (DEAD) is the DEAD box element. One can recognise a Helicase C-terminal domain in the interval 458–633 (FLAQAGPKVK…EGMFRGQALI (176 aa)).

This sequence belongs to the DEAD box helicase family. MRH4 subfamily.

Its subcellular location is the mitochondrion. It catalyses the reaction ATP + H2O = ADP + phosphate + H(+). In terms of biological role, ATP-binding RNA helicase involved in mitochondrial RNA metabolism. Required for maintenance of mitochondrial DNA. The sequence is that of ATP-dependent RNA helicase mrh4, mitochondrial (mrh4) from Aspergillus niger (strain ATCC MYA-4892 / CBS 513.88 / FGSC A1513).